The chain runs to 89 residues: Cytochrome b-c1 complex subunit 6, mitochondrial (89 aa).

Residues 1 to 13 (MGLEDERKMLTGS) constitute a mitochondrion transit peptide. Residues 1–27 (MGLEDERKMLTGSGDPKEEEEEELVDP) are disordered. Cystine bridges form between C35/C79 and C51/C65. Position 40 is an N6-acetyllysine (K40). K83 bears the N6-acetyllysine mark.

It belongs to the UQCRH/QCR6 family. In terms of assembly, component of the ubiquinol-cytochrome c oxidoreductase (cytochrome b-c1 complex, complex III, CIII), a multisubunit enzyme composed of 11 subunits. The complex is composed of 3 respiratory subunits cytochrome b, cytochrome c1 and Rieske protein UQCRFS1, 2 core protein subunits UQCRC1/QCR1 and UQCRC2/QCR2, and 6 low-molecular weight protein subunits UQCRH/QCR6, UQCRB/QCR7, UQCRQ/QCR8, UQCR10/QCR9, UQCR11/QCR10 and subunit 9, the cleavage product of Rieske protein UQCRFS1. The complex exists as an obligatory dimer and forms supercomplexes (SCs) in the inner mitochondrial membrane with NADH-ubiquinone oxidoreductase (complex I, CI) and cytochrome c oxidase (complex IV, CIV), resulting in different assemblies (supercomplex SCI(1)III(2)IV(1) and megacomplex MCI(2)III(2)IV(2)).

It is found in the mitochondrion inner membrane. Its function is as follows. Component of the ubiquinol-cytochrome c oxidoreductase, a multisubunit transmembrane complex that is part of the mitochondrial electron transport chain which drives oxidative phosphorylation. The respiratory chain contains 3 multisubunit complexes succinate dehydrogenase (complex II, CII), ubiquinol-cytochrome c oxidoreductase (cytochrome b-c1 complex, complex III, CIII) and cytochrome c oxidase (complex IV, CIV), that cooperate to transfer electrons derived from NADH and succinate to molecular oxygen, creating an electrochemical gradient over the inner membrane that drives transmembrane transport and the ATP synthase. The cytochrome b-c1 complex catalyzes electron transfer from ubiquinol to cytochrome c, linking this redox reaction to translocation of protons across the mitochondrial inner membrane, with protons being carried across the membrane as hydrogens on the quinol. In the process called Q cycle, 2 protons are consumed from the matrix, 4 protons are released into the intermembrane space and 2 electrons are passed to cytochrome c. The chain is Cytochrome b-c1 complex subunit 6, mitochondrial (Uqcrh) from Rattus norvegicus (Rat).